Consider the following 700-residue polypeptide: Elongation factor G 1 (700 aa).

In terms of domain architecture, tr-type G spans 8 to 290; sequence ERYRNIGISA…AVIDYLPSPA (283 aa). GTP-binding positions include 17 to 24, 88 to 92, and 142 to 145; these read AHIDAGKT, DTPGH, and NKMD.

Belongs to the TRAFAC class translation factor GTPase superfamily. Classic translation factor GTPase family. EF-G/EF-2 subfamily.

It localises to the cytoplasm. In terms of biological role, catalyzes the GTP-dependent ribosomal translocation step during translation elongation. During this step, the ribosome changes from the pre-translocational (PRE) to the post-translocational (POST) state as the newly formed A-site-bound peptidyl-tRNA and P-site-bound deacylated tRNA move to the P and E sites, respectively. Catalyzes the coordinated movement of the two tRNA molecules, the mRNA and conformational changes in the ribosome. The polypeptide is Elongation factor G 1 (Bordetella bronchiseptica (strain ATCC BAA-588 / NCTC 13252 / RB50) (Alcaligenes bronchisepticus)).